The sequence spans 844 residues: RPA-related protein RADX (844 aa).

The OB DNA-binding region spans 228-331 (WHNRKNFPAL…LISTMEICLN (104 aa)). Disordered regions lie at residues 571–609 (PASETLQNASPPSTSQAAAKEGHYHERGSKRSQDDRPMD) and 626–664 (GPTANPVPVPQPHSSAQMKGNKPNIPSRENSTANATGKS). Positions 572–587 (ASETLQNASPPSTSQA) are enriched in polar residues. Basic and acidic residues predominate over residues 590 to 608 (KEGHYHERGSKRSQDDRPM). Residues 652-662 (SRENSTANATG) show a composition bias toward polar residues.

The protein resides in the chromosome. Its function is as follows. Single-stranded DNA-binding protein recruited to replication forks to maintain genome stability. Prevents fork collapse by antagonizing the accumulation of RAD51 at forks to ensure the proper balance of fork remodeling and protection without interfering with the capacity of cells to complete homologous recombination of double-strand breaks. This chain is RPA-related protein RADX, found in Rattus norvegicus (Rat).